Consider the following 1253-residue polypeptide: Myosin heavy chain 95F (1253 aa).

Residues 3–54 (EDTQLVWVRDAAEGYIQGRITEIGAKEFEVTPTDRKYPKRTCHFDDIHSSCD) form the Myosin N-terminal SH3-like domain. The Myosin motor domain occupies 57–766 (QDHDDNCELM…KFVEFDRIMR (710 aa)). Residue 151 to 158 (GESGAGKT) coordinates ATP. The segment at 647–666 (GELMEKLEQNGTNFIRCIKP) is actin-binding. Residues 808 to 837 (RNKCVLIAQRIARGFLARKQHRPRYQGIGK) enclose the IQ domain. Residues 900–1022 (ANMNKLTVDL…LRLANESNGQ (123 aa)) are a coiled coil. The tract at residues 1187-1193 (PILLVAG) is hydrophobic region. The tract at residues 1233–1253 (AYKNLGAAKPNGPAAAMQKQQ) is disordered.

The protein belongs to the TRAFAC class myosin-kinesin ATPase superfamily. Myosin family. As to expression, isoform B is present at a higher level in the head and gonads than in the thoraxes. Isoform 145 kDa is found only in the head. CLIP-190 and jar are coexpressed at several times in development and in a number of tissues, including embryonic axonal neuron processes and posterior pole.

It localises to the cytoplasm. Its subcellular location is the cytoskeleton. Myosin is a protein that binds to actin and has ATPase activity that is activated by actin. Together CLIP-190 and jar may coordinate the interaction between the actin and microtubule cytoskeleton. May link endocytic vesicles to microtubules and may be involved in transport in the early embryo and in the dynamic process of dorsal closure. It is believed that its function changes during the life cycle. The sequence is that of Myosin heavy chain 95F (jar) from Drosophila melanogaster (Fruit fly).